The sequence spans 433 residues: Chaperone SurA (433 aa).

The N-terminal stretch at 1–20 (MKNWRTLIFGLMFSVSTAFA) is a signal peptide. PpiC domains follow at residues 171-272 (DTEL…KVND) and 282-382 (VTEV…QLLD).

It is found in the periplasm. The catalysed reaction is [protein]-peptidylproline (omega=180) = [protein]-peptidylproline (omega=0). In terms of biological role, chaperone involved in the correct folding and assembly of outer membrane proteins. Recognizes specific patterns of aromatic residues and the orientation of their side chains, which are found more frequently in integral outer membrane proteins. May act in both early periplasmic and late outer membrane-associated steps of protein maturation. This Photorhabdus laumondii subsp. laumondii (strain DSM 15139 / CIP 105565 / TT01) (Photorhabdus luminescens subsp. laumondii) protein is Chaperone SurA.